Consider the following 448-residue polypeptide: MGQAQSGNFSNFGDGANGDNKKDQKKDKPKYEPPVPTRTGRRKKKAQSGPDASAKLPTVIPTTRCRLRLLKMQRIHDHLLMEEEYVQNQERLKPQDERTQEERNRVDEIRGTPMSVGTLEEIIDDDHAIVSTAGPEYYVSIMSFVDKDMLEPGCSVLLHHKAMSIVGLLLDDTDPMINVMKLDKAPTESYADIGGLESQIQEIKEAVELPLTHPELYEEMGIKPPKGVILYGAPGTGKTLLAKAVANQTSATFLRVVGSELIQKYLGDGPRLVRQLFNAAEEHSPSIVFIDEIDAIGTKRYDAQSGAEREIQRTMLELLNQLDGFDTSQRDIKVIMATNRISDLDPALIRPGRIDRKILFENPDEATKRKIFTIHTSKMNLGEDVNLEELIQCKDDLSGAEIKAIVSEAGLLALRERRMRVVMDDFRQAREKVLKTKDEGGPAGGLYI.

Positions 1-10 (MGQAQSGNFS) are enriched in polar residues. The disordered stretch occupies residues 1 to 58 (MGQAQSGNFSNFGDGANGDNKKDQKKDKPKYEPPVPTRTGRRKKKAQSGPDASAKLPT). Basic and acidic residues predominate over residues 19-31 (DNKKDQKKDKPKY). Residue 232 to 239 (GAPGTGKT) participates in ATP binding.

This sequence belongs to the AAA ATPase family.

The protein localises to the cytoplasm. It localises to the nucleus. Functionally, the 26S proteasome is involved in the ATP-dependent degradation of ubiquitinated proteins. The regulatory (or ATPase) complex confers ATP dependency and substrate specificity to the 26S complex. The polypeptide is 26S proteasome regulatory subunit 4 homolog (mts2) (Schizosaccharomyces pombe (strain 972 / ATCC 24843) (Fission yeast)).